The primary structure comprises 255 residues: tRNA (guanine-N(1)-)-methyltransferase (255 aa).

Residues Gly119 and 139 to 144 (IGDFIL) contribute to the S-adenosyl-L-methionine site.

It belongs to the RNA methyltransferase TrmD family. In terms of assembly, homodimer.

The protein localises to the cytoplasm. It catalyses the reaction guanosine(37) in tRNA + S-adenosyl-L-methionine = N(1)-methylguanosine(37) in tRNA + S-adenosyl-L-homocysteine + H(+). Specifically methylates guanosine-37 in various tRNAs. In Pseudoalteromonas translucida (strain TAC 125), this protein is tRNA (guanine-N(1)-)-methyltransferase.